Here is a 412-residue protein sequence, read N- to C-terminus: G-protein coupled receptor homolog UL33 (412 aa).

Topologically, residues 1–29 are virion surface; the sequence is MDTIIHNSTRNNTPPHINDTCNMTGPLFA. N-linked (GlcNAc...) asparagine; by host glycans are attached at residues asparagine 7, asparagine 18, and asparagine 22. Residues 30–54 traverse the membrane as a helical segment; that stretch reads IRTTEAVLNTFIIFVGGPLNAIVLI. Topologically, residues 55–70 are intravirion; it reads TQLLTNRVLGYSTPTI. The helical transmembrane segment at 71 to 95 threads the bilayer; it reads YMTNLYSTNFLTLTVLPFIVLSNQW. The Virion surface portion of the chain corresponds to 96–102; it reads LLPAGVA. The helical transmembrane segment at 103 to 129 threads the bilayer; the sequence is SCKFLSVIYYSSCTVGFATVALIAADR. Residues cysteine 104 and cysteine 188 are joined by a disulfide bond. The Intravirion portion of the chain corresponds to 130–138; that stretch reads YRVLHKRTY. A helical transmembrane segment spans residues 139–160; that stretch reads ARQSYRSTYMILLLTWLAGLIF. Topologically, residues 161 to 203 are virion surface; sequence SVPAAVYTTVVMHHDANDTNNTNGHATCVLYFVAEEVHTVLLS. N-linked (GlcNAc...) asparagine; by host glycans are attached at residues asparagine 177 and asparagine 180. A helical transmembrane segment spans residues 204–224; the sequence is WKVLLTMVWGAAPVIMMTWFY. The Intravirion segment spans residues 225-240; it reads AFFYSTVQRTSQKQRS. The chain crosses the membrane as a helical span at residues 241 to 267; that stretch reads RTLTFVSVLLISFVALQTPYVSLMIFN. Over 268-281 the chain is Virion surface; the sequence is SYATTAWPMQCEHL. Residues 282 to 305 traverse the membrane as a helical segment; sequence TLRRTIGTLARVVPHLHCLINPIL. At 306–412 the chain is on the intravirion side; sequence YALLGHDFLQ…SQSHHNLSGV (107 aa). Residues 377-412 form a disordered region; it reads NFPSGTWKGGQKTASNDTSTKIPHRLSQSHHNLSGV. Residues 388–397 are compositionally biased toward polar residues; that stretch reads KTASNDTSTK.

The protein belongs to the G-protein coupled receptor 1 family. In terms of assembly, heterodimerizes with US28.

The protein localises to the virion. It localises to the host cell membrane. Its subcellular location is the host cytoplasm. Functionally, G-protein-coupled receptor (vGPCR) that constitutively activates multiple oncogenic signaling pathways including STAT3, AP-1, phospholipase C, NF-kappa-B or cAMP-responsive element (CRE) pathways. Plays an important role in viral reactivation from latency through activation of host CREB1, facilitating its recruitment to the viral major immediate early (MIE) genes. In turn, expression of the MIE-driven genes such as UL123 are de-repressed. Also facilitates virus dissemination via the extracellular and cell-to-cell route. The protein is G-protein coupled receptor homolog UL33 (UL33) of Human cytomegalovirus (strain AD169) (HHV-5).